A 455-amino-acid polypeptide reads, in one-letter code: tRNA modification GTPase MnmE (455 aa).

R26, E86, and R125 together coordinate (6S)-5-formyl-5,6,7,8-tetrahydrofolate. The 155-residue stretch at 222–376 (GLKTAIIGRP…VEEKINQIFF (155 aa)) folds into the TrmE-type G domain. N232 lines the K(+) pocket. Residues 232–237 (NVGKSS), 251–257 (TDIAGTT), and 276–279 (DTAG) contribute to the GTP site. S236 is a Mg(2+) binding site. Residues T251, I253, and T256 each contribute to the K(+) site. T257 contacts Mg(2+). Residue K455 participates in (6S)-5-formyl-5,6,7,8-tetrahydrofolate binding.

The protein belongs to the TRAFAC class TrmE-Era-EngA-EngB-Septin-like GTPase superfamily. TrmE GTPase family. As to quaternary structure, homodimer. Heterotetramer of two MnmE and two MnmG subunits. K(+) serves as cofactor.

It localises to the cytoplasm. Its function is as follows. Exhibits a very high intrinsic GTPase hydrolysis rate. Involved in the addition of a carboxymethylaminomethyl (cmnm) group at the wobble position (U34) of certain tRNAs, forming tRNA-cmnm(5)s(2)U34. This chain is tRNA modification GTPase MnmE, found in Lactococcus lactis subsp. lactis (strain IL1403) (Streptococcus lactis).